The primary structure comprises 408 residues: Alpha-2Da adrenergic receptor (408 aa).

Residues M1 to S30 are Extracellular-facing. N-linked (GlcNAc...) asparagine glycosylation is found at N8 and N15. A helical transmembrane segment spans residues A31 to V55. Residues L56 to L67 are Cytoplasmic-facing. The helical transmembrane segment at F68–M93 threads the bilayer. Residues G94 to C103 lie on the Extracellular side of the membrane. C103 and C176 are oxidised to a cystine. The helical transmembrane segment at A104–L126 threads the bilayer. At D127–I147 the chain is on the cytoplasmic side. The chain crosses the membrane as a helical span at residues K148 to K170. The Extracellular segment spans residues H171–E181. Residues T182–C205 form a helical membrane-spanning segment. Topologically, residues K206–V332 are cytoplasmic. The tract at residues F242–Q306 is disordered. Residues E260–A270 show a composition bias toward acidic residues. Over residues R277–R286 the composition is skewed to basic residues. Residues L333 to V356 form a helical membrane-spanning segment. The Extracellular portion of the chain corresponds to C357–K369. Residues L370 to N390 traverse the membrane as a helical segment. At R391–T408 the chain is on the cytoplasmic side.

This sequence belongs to the G-protein coupled receptor 1 family. Adrenergic receptor subfamily. ADRA2D sub-subfamily.

It is found in the cell membrane. Alpha-2 adrenergic receptors mediate the catecholamine-induced inhibition of adenylate cyclase through the action of G proteins. The order of potency for this receptor is dexmedetomidine &gt; norepinephrine &gt; epinephrine &gt; oxymetazoline. This is Alpha-2Da adrenergic receptor (adra2da) from Danio rerio (Zebrafish).